A 449-amino-acid chain; its full sequence is Hyaluronidase-3 (449 aa).

The first 23 residues, 1 to 23 (MYHIWIKFLAAWIFLKKFNGVHV), serve as a signal peptide directing secretion. Intrachain disulfides connect Cys47-Cys340 and Cys211-Cys227. Residues Asn67, Asn103, and Asn111 are each glycosylated (N-linked (GlcNAc...) asparagine). Residue Glu135 is the Proton donor of the active site. An N-linked (GlcNAc...) asparagine glycan is attached at Asn153. Asn357 is a glycosylation site (N-linked (GlcNAc...) asparagine). Disulfide bonds link Cys365–Cys376, Cys370–Cys427, and Cys429–Cys438. N-linked (GlcNAc...) asparagine glycosylation occurs at Asn401. An EGF-like domain is found at 427-438 (CQCYQGWKGLYC).

Belongs to the glycosyl hydrolase 56 family. Monomer. As to expression, expressed by the venom gland.

The protein resides in the secreted. It catalyses the reaction Random hydrolysis of (1-&gt;4)-linkages between N-acetyl-beta-D-glucosamine and D-glucuronate residues in hyaluronate.. In terms of biological role, snake venom endo-hyaluronidase that degrades hyaluronan to smaller oligosaccharide fragments. In venom, it is not toxic by itself, but increases the diffusion of other venom proteins by degrading the extracellular matrix. In addition, it displays antiedematogenic activity. This is Hyaluronidase-3 from Cerastes cerastes (Horned desert viper).